A 552-amino-acid polypeptide reads, in one-letter code: Arginine--tRNA ligase (552 aa).

Positions 123–133 match the 'HIGH' region motif; the sequence is ANPTGPLTIGR.

It belongs to the class-I aminoacyl-tRNA synthetase family. As to quaternary structure, monomer.

It localises to the cytoplasm. It carries out the reaction tRNA(Arg) + L-arginine + ATP = L-arginyl-tRNA(Arg) + AMP + diphosphate. The polypeptide is Arginine--tRNA ligase (Pelodictyon phaeoclathratiforme (strain DSM 5477 / BU-1)).